A 355-amino-acid chain; its full sequence is 3-dehydroquinate synthase (355 aa).

NAD(+)-binding positions include 98–102 (GVIGD), 122–123 (TT), Lys-135, Lys-144, and 162–165 (TLNT). Zn(2+) is bound by residues Glu-177, His-240, and His-257.

This sequence belongs to the sugar phosphate cyclases superfamily. Dehydroquinate synthase family. Requires Co(2+) as cofactor. It depends on Zn(2+) as a cofactor. NAD(+) is required as a cofactor.

The protein localises to the cytoplasm. The enzyme catalyses 7-phospho-2-dehydro-3-deoxy-D-arabino-heptonate = 3-dehydroquinate + phosphate. Its pathway is metabolic intermediate biosynthesis; chorismate biosynthesis; chorismate from D-erythrose 4-phosphate and phosphoenolpyruvate: step 2/7. Catalyzes the conversion of 3-deoxy-D-arabino-heptulosonate 7-phosphate (DAHP) to dehydroquinate (DHQ). The protein is 3-dehydroquinate synthase of Dictyoglomus thermophilum (strain ATCC 35947 / DSM 3960 / H-6-12).